We begin with the raw amino-acid sequence, 306 residues long: Tryptophan 2,3-dioxygenase (306 aa).

The interval 1-29 (MQPPGDDAAPRCPFAGAHAPDAPHVPEAA) is disordered. Substrate-binding positions include 75–79 (FIIQH), Y137, and R141. H264 contacts heme. T278 is a substrate binding site.

This sequence belongs to the tryptophan 2,3-dioxygenase family. In terms of assembly, homotetramer. It depends on heme as a cofactor.

The enzyme catalyses L-tryptophan + O2 = N-formyl-L-kynurenine. It participates in amino-acid degradation; L-tryptophan degradation via kynurenine pathway; L-kynurenine from L-tryptophan: step 1/2. Functionally, heme-dependent dioxygenase that catalyzes the oxidative cleavage of the L-tryptophan (L-Trp) pyrrole ring and converts L-tryptophan to N-formyl-L-kynurenine. Catalyzes the oxidative cleavage of the indole moiety. This chain is Tryptophan 2,3-dioxygenase, found in Burkholderia mallei (strain NCTC 10247).